The chain runs to 137 residues: Small ribosomal subunit protein uS19 (137 aa).

Positions 115 to 137 (RNRVSHGSAGVGATRSSKFVPLK) are disordered.

The protein belongs to the universal ribosomal protein uS19 family.

Its function is as follows. Protein S19 forms a complex with S13 that binds strongly to the 16S ribosomal RNA. In Methanococcoides burtonii (strain DSM 6242 / NBRC 107633 / OCM 468 / ACE-M), this protein is Small ribosomal subunit protein uS19.